Reading from the N-terminus, the 283-residue chain is Thymidylate synthase (283 aa).

Arg22 provides a ligand contact to dUMP. The active-site Nucleophile is Cys160. DUMP contacts are provided by residues Arg180–Asp183, Asn191, and His221–Tyr223. (6R)-5,10-methylene-5,6,7,8-tetrahydrofolate is bound at residue Asp183. Ser282 provides a ligand contact to (6R)-5,10-methylene-5,6,7,8-tetrahydrofolate.

The protein belongs to the thymidylate synthase family. Bacterial-type ThyA subfamily. As to quaternary structure, homodimer.

It is found in the cytoplasm. The enzyme catalyses dUMP + (6R)-5,10-methylene-5,6,7,8-tetrahydrofolate = 7,8-dihydrofolate + dTMP. The protein operates within pyrimidine metabolism; dTTP biosynthesis. In terms of biological role, catalyzes the reductive methylation of 2'-deoxyuridine-5'-monophosphate (dUMP) to 2'-deoxythymidine-5'-monophosphate (dTMP) while utilizing 5,10-methylenetetrahydrofolate (mTHF) as the methyl donor and reductant in the reaction, yielding dihydrofolate (DHF) as a by-product. This enzymatic reaction provides an intracellular de novo source of dTMP, an essential precursor for DNA biosynthesis. The polypeptide is Thymidylate synthase (Shewanella sediminis (strain HAW-EB3)).